The following is a 326-amino-acid chain: Histone-lysine N-methyltransferase Suv4-20 (326 aa).

One can recognise an SET domain in the interval 163–273 (QECTRYSLEG…AGDEITCFYG (111 aa)). The interval 294–313 (RGKFSTSDEEENDEPSALSE) is disordered.

It belongs to the class V-like SAM-binding methyltransferase superfamily. Histone-lysine methyltransferase family. Suvar4-20 subfamily.

Its subcellular location is the nucleus. It is found in the chromosome. The catalysed reaction is N(6)-methyl-L-lysyl(20)-[histone H4] + S-adenosyl-L-methionine = N(6),N(6)-dimethyl-L-lysyl(20)-[histone H4] + S-adenosyl-L-homocysteine + H(+). The enzyme catalyses N(6),N(6)-dimethyl-L-lysyl(20)-[histone H4] + S-adenosyl-L-methionine = N(6),N(6),N(6)-trimethyl-L-lysyl(20)-[histone H4] + S-adenosyl-L-homocysteine + H(+). In terms of biological role, histone methyltransferase that specifically di- and trimethylates 'Lys-20' of histone H4 (H4K20me2/me3). H4 'Lys-20' trimethylation represents a specific tag for epigenetic transcriptional repression. Contributes to dosage compensation of X chromosome-relative to autosome-linked gene expression, possibly by converting H4K20me1 to H4K20m2/me3 on autosomes. Involved in the regulation of growth and body fat metabolism downstream of the TOR complex 2 pathway. The protein is Histone-lysine N-methyltransferase Suv4-20 of Caenorhabditis briggsae.